A 515-amino-acid chain; its full sequence is Maturase K (515 aa).

Belongs to the intron maturase 2 family. MatK subfamily.

It is found in the plastid. The protein localises to the chloroplast. Its function is as follows. Usually encoded in the trnK tRNA gene intron. Probably assists in splicing its own and other chloroplast group II introns. The polypeptide is Maturase K (Pinus yunnanensis (Yunnan pine)).